The chain runs to 320 residues: Ferrochelatase (320 aa).

Fe cation-binding residues include His194 and Glu275.

The protein belongs to the ferrochelatase family.

It localises to the cytoplasm. It catalyses the reaction heme b + 2 H(+) = protoporphyrin IX + Fe(2+). Its pathway is porphyrin-containing compound metabolism; protoheme biosynthesis; protoheme from protoporphyrin-IX: step 1/1. Functionally, catalyzes the ferrous insertion into protoporphyrin IX. This chain is Ferrochelatase, found in Xylella fastidiosa (strain M12).